The chain runs to 202 residues: Probable cytochrome c oxidase subunit 3 (202 aa).

5 helical membrane passes run 30-50 (VVWL…YFTA), 69-89 (AVPV…GVFS), 101-121 (WYVI…YEYY), 141-161 (LATG…IFLL), and 178-198 (IVVS…FTVI).

The protein belongs to the cytochrome c oxidase subunit 3 family.

The protein resides in the cell membrane. It carries out the reaction 4 Fe(II)-[cytochrome c] + O2 + 8 H(+)(in) = 4 Fe(III)-[cytochrome c] + 2 H2O + 4 H(+)(out). The protein is Probable cytochrome c oxidase subunit 3 (ctaE) of Mycobacterium leprae (strain TN).